The following is a 334-amino-acid chain: Fructose-1,6-bisphosphatase class 1 (334 aa).

Mg(2+)-binding residues include E92, D114, L116, and D117. Residues 117–120 (DGSS) and N209 contribute to the substrate site. E281 lines the Mg(2+) pocket.

It belongs to the FBPase class 1 family. In terms of assembly, homotetramer. Mg(2+) serves as cofactor.

It is found in the cytoplasm. The catalysed reaction is beta-D-fructose 1,6-bisphosphate + H2O = beta-D-fructose 6-phosphate + phosphate. It functions in the pathway carbohydrate biosynthesis; gluconeogenesis. In Nitrosomonas europaea (strain ATCC 19718 / CIP 103999 / KCTC 2705 / NBRC 14298), this protein is Fructose-1,6-bisphosphatase class 1.